The sequence spans 210 residues: Orotate phosphoribosyltransferase (210 aa).

Residues R94, K98, H100, and 120–128 contribute to the 5-phospho-alpha-D-ribose 1-diphosphate site; that span reads EDLISTGGS. Residue S124 participates in orotate binding.

This sequence belongs to the purine/pyrimidine phosphoribosyltransferase family. PyrE subfamily. As to quaternary structure, homodimer. Mg(2+) serves as cofactor.

It catalyses the reaction orotidine 5'-phosphate + diphosphate = orotate + 5-phospho-alpha-D-ribose 1-diphosphate. It functions in the pathway pyrimidine metabolism; UMP biosynthesis via de novo pathway; UMP from orotate: step 1/2. Catalyzes the transfer of a ribosyl phosphate group from 5-phosphoribose 1-diphosphate to orotate, leading to the formation of orotidine monophosphate (OMP). In Bacillus cereus (strain G9842), this protein is Orotate phosphoribosyltransferase.